The following is a 119-amino-acid chain: Acidic phospholipase A2 CM-II (119 aa).

The Ca(2+) site is built by tyrosine 25, glycine 27, and glycine 29. Histidine 45 is a catalytic residue. Aspartate 46 is a binding site for Ca(2+). Residue aspartate 87 is part of the active site.

It belongs to the phospholipase A2 family. Group II subfamily. D49 sub-subfamily. It depends on Ca(2+) as a cofactor. Post-translationally, contains 6 disulfide bonds. As to expression, expressed by the venom gland.

It is found in the secreted. The enzyme catalyses a 1,2-diacyl-sn-glycero-3-phosphocholine + H2O = a 1-acyl-sn-glycero-3-phosphocholine + a fatty acid + H(+). Functionally, PLA2 catalyzes the calcium-dependent hydrolysis of the 2-acyl groups in 3-sn-phosphoglycerides. This chain is Acidic phospholipase A2 CM-II, found in Bitis nasicornis (Rhinoceros adder).